The following is an 83-amino-acid chain: Short neurotoxin 3FTx-Oxy3 (83 aa).

Residues 1–21 form the signal peptide; it reads MKTLLLTLVVVTIVCLDLGYT. Intrachain disulfides connect Cys-24-Cys-45, Cys-38-Cys-62, Cys-64-Cys-75, and Cys-76-Cys-81.

Belongs to the three-finger toxin family. Short-chain subfamily. Type I alpha-neurotoxin sub-subfamily. As to expression, expressed by the venom gland.

The protein resides in the secreted. Functionally, binds to muscle nicotinic acetylcholine receptor (nAChR) and inhibit acetylcholine from binding to the receptor, thereby impairing neuromuscular transmission. This chain is Short neurotoxin 3FTx-Oxy3, found in Oxyuranus microlepidotus (Inland taipan).